The sequence spans 415 residues: Gamma-glutamyl phosphate reductase (415 aa).

Belongs to the gamma-glutamyl phosphate reductase family.

It is found in the cytoplasm. The catalysed reaction is L-glutamate 5-semialdehyde + phosphate + NADP(+) = L-glutamyl 5-phosphate + NADPH + H(+). The protein operates within amino-acid biosynthesis; L-proline biosynthesis; L-glutamate 5-semialdehyde from L-glutamate: step 2/2. Its function is as follows. Catalyzes the NADPH-dependent reduction of L-glutamate 5-phosphate into L-glutamate 5-semialdehyde and phosphate. The product spontaneously undergoes cyclization to form 1-pyrroline-5-carboxylate. In Bacillus cereus (strain ZK / E33L), this protein is Gamma-glutamyl phosphate reductase.